We begin with the raw amino-acid sequence, 450 residues long: tRNA-2-methylthio-N(6)-dimethylallyladenosine synthase (450 aa).

One can recognise an MTTase N-terminal domain in the interval 2–119 (KKVFVKTYGC…LPDLIARRQR (118 aa)). Residues Cys-11, Cys-48, Cys-82, Cys-156, Cys-160, and Cys-163 each contribute to the [4Fe-4S] cluster site. The 234-residue stretch at 142-375 (RVEGPSAFVS…QATIEENVQR (234 aa)) folds into the Radical SAM core domain. The region spanning 378–448 (QNMVGTVQRI…PHSLRGEIVV (71 aa)) is the TRAM domain.

The protein belongs to the methylthiotransferase family. MiaB subfamily. As to quaternary structure, monomer. [4Fe-4S] cluster serves as cofactor.

It is found in the cytoplasm. The catalysed reaction is N(6)-dimethylallyladenosine(37) in tRNA + (sulfur carrier)-SH + AH2 + 2 S-adenosyl-L-methionine = 2-methylsulfanyl-N(6)-dimethylallyladenosine(37) in tRNA + (sulfur carrier)-H + 5'-deoxyadenosine + L-methionine + A + S-adenosyl-L-homocysteine + 2 H(+). In terms of biological role, catalyzes the methylthiolation of N6-(dimethylallyl)adenosine (i(6)A), leading to the formation of 2-methylthio-N6-(dimethylallyl)adenosine (ms(2)i(6)A) at position 37 in tRNAs that read codons beginning with uridine. This chain is tRNA-2-methylthio-N(6)-dimethylallyladenosine synthase, found in Cupriavidus necator (strain ATCC 17699 / DSM 428 / KCTC 22496 / NCIMB 10442 / H16 / Stanier 337) (Ralstonia eutropha).